The primary structure comprises 135 residues: UPF0299 membrane protein YPK_2559 (135 aa).

A run of 3 helical transmembrane segments spans residues 30 to 50, 66 to 86, and 93 to 113; these read LLLP…FVLL, LLIR…MQYY, and FGPI…VVAY.

Belongs to the UPF0299 family.

It is found in the cell inner membrane. The chain is UPF0299 membrane protein YPK_2559 from Yersinia pseudotuberculosis serotype O:3 (strain YPIII).